The following is a 298-amino-acid chain: tRNA dimethylallyltransferase 2 (298 aa).

ATP is bound at residue 10 to 17; the sequence is GPTASGKT. 12-17 contacts substrate; the sequence is TASGKT. The interval 35-38 is interaction with substrate tRNA; sequence DSRQ.

It belongs to the IPP transferase family. As to quaternary structure, monomer. Requires Mg(2+) as cofactor.

It carries out the reaction adenosine(37) in tRNA + dimethylallyl diphosphate = N(6)-dimethylallyladenosine(37) in tRNA + diphosphate. Its function is as follows. Catalyzes the transfer of a dimethylallyl group onto the adenine at position 37 in tRNAs that read codons beginning with uridine, leading to the formation of N6-(dimethylallyl)adenosine (i(6)A). The sequence is that of tRNA dimethylallyltransferase 2 from Syntrophotalea carbinolica (strain DSM 2380 / NBRC 103641 / GraBd1) (Pelobacter carbinolicus).